A 321-amino-acid polypeptide reads, in one-letter code: Probable arabinan endo-1,5-alpha-L-arabinosidase A (321 aa).

Residues 1–19 (MSASVFVVVASCLAALAHG) form the signal peptide. The Proton acceptor role is filled by aspartate 34. Residue glutamate 200 is the Proton donor of the active site.

This sequence belongs to the glycosyl hydrolase 43 family.

The protein resides in the secreted. The enzyme catalyses Endohydrolysis of (1-&gt;5)-alpha-arabinofuranosidic linkages in (1-&gt;5)-arabinans.. It functions in the pathway glycan metabolism; L-arabinan degradation. In terms of biological role, endo-1,5-alpha-L-arabinanase involved in degradation of pectin. Its preferred substrate is linear 1,5-alpha-L-arabinan. This is Probable arabinan endo-1,5-alpha-L-arabinosidase A (abnA) from Aspergillus fumigatus (strain ATCC MYA-4609 / CBS 101355 / FGSC A1100 / Af293) (Neosartorya fumigata).